The primary structure comprises 641 residues: SUMO-activating enzyme subunit 2 (641 aa).

Residues 24–29 (GAGGIG), Asp48, 56–59 (NLNR), Lys72, 95–96 (SI), and 117–122 (DNNAAR) each bind ATP. 2 residues coordinate Zn(2+): Cys158 and Cys161. Cys173 acts as the Glycyl thioester intermediate in catalysis. A Glycyl lysine isopeptide (Lys-Gly) (interchain with G-Cter in SUMO) cross-link involves residue Lys190. Lys236 participates in a covalent cross-link: Glycyl lysine isopeptide (Lys-Gly) (interchain with G-Cter in SUMO1). Glycyl lysine isopeptide (Lys-Gly) (interchain with G-Cter in SUMO) cross-links involve residues Lys257 and Lys275. Cys439 and Cys442 together coordinate Zn(2+). The segment at 546-641 (GDVPEKGPQK…EEDDDIIALD (96 aa)) is disordered. The span at 556–579 (PSEQSVKNITNGSDDGAQPSTSKA) shows a compositional bias: polar residues. A compositionally biased stretch (acidic residues) spans 582–594 (QDDVLIVDSDEES). Glycyl lysine isopeptide (Lys-Gly) (interchain with G-Cter in SUMO) cross-links involve residues Lys610, Lys612, and Lys623. Residues 630-641 (PVEEDDDIIALD) show a composition bias toward acidic residues.

This sequence belongs to the ubiquitin-activating E1 family. In terms of assembly, heterodimer of sae1 and uba2/sae2. The heterodimer corresponds to the two domains that are encoded on a single polypeptide chain in ubiquitin-activating enzyme E1. Interacts with ube2i. In terms of processing, sumoylated with SUMO1 and SUMO2/3 and by UBC9. Sumoylation at Lys-236 inhibits enzymatic activity. Sumoylation at the C-terminal lysine cluster plays an essential role in nuclear trafficking.

It is found in the cytoplasm. The protein resides in the nucleus. It participates in protein modification; protein sumoylation. Its function is as follows. The heterodimer acts as an E1 ligase for sumo1, sumo2, and sumo3. It mediates ATP-dependent activation of sumo proteins followed by formation of a thioester bond between a sumo protein and a conserved active site cysteine residue on uba2/sae2. In Xenopus tropicalis (Western clawed frog), this protein is SUMO-activating enzyme subunit 2 (uba2).